A 263-amino-acid chain; its full sequence is HTH-type transcriptional repressor NanR (263 aa).

An HTH gntR-type domain is found at 30–98; that stretch reads KKLSEMVEEE…NGERARVSRP (69 aa). Positions 58–77 form a DNA-binding region, H-T-H motif; sequence ERELMAFFNVGRPSVREALA.

It belongs to the NanR family.

Functionally, transcriptional repressor that controls expression of the genes required for the catabolism of sialic acids. The chain is HTH-type transcriptional repressor NanR from Salmonella arizonae (strain ATCC BAA-731 / CDC346-86 / RSK2980).